A 153-amino-acid polypeptide reads, in one-letter code: Ribonuclease H (153 aa).

An RNase H type-1 domain is found at 1–141; that stretch reads MKKIQLFTDG…CDDLARRAAE (141 aa). 4 residues coordinate Mg(2+): D9, E47, D69, and D133.

This sequence belongs to the RNase H family. Monomer. The cofactor is Mg(2+).

Its subcellular location is the cytoplasm. It catalyses the reaction Endonucleolytic cleavage to 5'-phosphomonoester.. In terms of biological role, endonuclease that specifically degrades the RNA of RNA-DNA hybrids. The sequence is that of Ribonuclease H from Psychromonas ingrahamii (strain DSM 17664 / CCUG 51855 / 37).